A 198-amino-acid chain; its full sequence is uncharacterized protein (198 aa).

The C4-type zinc-finger motif lies at 9–43 (CPVCGGKGTFVITSHQIDIPYFGPVLETTMICEKC).

This sequence belongs to the ZPR1 family.

This is an uncharacterized protein from Methanocaldococcus jannaschii (strain ATCC 43067 / DSM 2661 / JAL-1 / JCM 10045 / NBRC 100440) (Methanococcus jannaschii).